Consider the following 213-residue polypeptide: Na(+)-translocating NADH-quinone reductase subunit D (213 aa).

7 consecutive transmembrane segments (helical) span residues 14–34, 42–62, 77–97, 101–121, 131–151, 154–174, and 183–203; these read ALWI…ALAV, LTMG…VSLL, IIIS…FFNI, LSVF…AESM, FLDG…ISII, LFGF…YASA, and LGLM…VWLV.

It belongs to the NqrDE/RnfAE family. In terms of assembly, composed of six subunits; NqrA, NqrB, NqrC, NqrD, NqrE and NqrF.

The protein localises to the cell inner membrane. It catalyses the reaction a ubiquinone + n Na(+)(in) + NADH + H(+) = a ubiquinol + n Na(+)(out) + NAD(+). NQR complex catalyzes the reduction of ubiquinone-1 to ubiquinol by two successive reactions, coupled with the transport of Na(+) ions from the cytoplasm to the periplasm. NqrA to NqrE are probably involved in the second step, the conversion of ubisemiquinone to ubiquinol. This Chlamydia muridarum (strain MoPn / Nigg) protein is Na(+)-translocating NADH-quinone reductase subunit D.